We begin with the raw amino-acid sequence, 492 residues long: Ribose import ATP-binding protein RbsA (492 aa).

ABC transporter domains lie at I3–K239 and R238–K492. Residue G35–S42 coordinates ATP.

Belongs to the ABC transporter superfamily. Ribose importer (TC 3.A.1.2.1) family. As to quaternary structure, the complex is composed of an ATP-binding protein (RbsA), two transmembrane proteins (RbsC) and a solute-binding protein (RbsB).

The protein localises to the cell membrane. The catalysed reaction is D-ribose(out) + ATP + H2O = D-ribose(in) + ADP + phosphate + H(+). Functionally, part of the ABC transporter complex RbsABC involved in ribose import. Responsible for energy coupling to the transport system. The protein is Ribose import ATP-binding protein RbsA of Streptococcus agalactiae serotype Ia (strain ATCC 27591 / A909 / CDC SS700).